The following is a 194-amino-acid chain: Fe/S biogenesis protein NfuA (194 aa).

2 residues coordinate [4Fe-4S] cluster: cysteine 152 and cysteine 155.

It belongs to the NfuA family. As to quaternary structure, homodimer. It depends on [4Fe-4S] cluster as a cofactor.

In terms of biological role, involved in iron-sulfur cluster biogenesis. Binds a 4Fe-4S cluster, can transfer this cluster to apoproteins, and thereby intervenes in the maturation of Fe/S proteins. Could also act as a scaffold/chaperone for damaged Fe/S proteins. In Pseudomonas putida (strain ATCC 700007 / DSM 6899 / JCM 31910 / BCRC 17059 / LMG 24140 / F1), this protein is Fe/S biogenesis protein NfuA.